The chain runs to 56 residues: Large ribosomal subunit protein bL32 (56 aa).

Residues 1–37 (MAVQQNKKSRSRRDMRRSHDALTTAAVSVDKASGETH) are disordered. Residues 7–16 (KKSRSRRDMR) show a composition bias toward basic residues.

This sequence belongs to the bacterial ribosomal protein bL32 family.

This Haemophilus influenzae (strain PittEE) protein is Large ribosomal subunit protein bL32.